The sequence spans 102 residues: snRNA-activating protein complex subunit 5 (102 aa).

Residues 73–82 (QTTLKLSTRS) are compositionally biased toward polar residues. A disordered region spans residues 73-102 (QTTLKLSTRSPMEEEEEEEEEEEEEEESDS). The segment covering 85–102 (EEEEEEEEEEEEEEESDS) has biased composition (acidic residues).

Part of the SNAPc complex composed of 5 subunits: SNAPC1, SNAPC2, SNAPC3, SNAPC4 and SNAPC5. SNAPC5 interacts with SNAPC4.

It localises to the nucleus. Functionally, part of the SNAPc complex required for the transcription of both RNA polymerase II and III small-nuclear RNA genes. Binds to the proximal sequence element (PSE), a non-TATA-box basal promoter element common to these 2 types of genes. Recruits TBP and BRF2 to the U6 snRNA TATA box. This Mus musculus (Mouse) protein is snRNA-activating protein complex subunit 5.